We begin with the raw amino-acid sequence, 220 residues long: Thiopurine S-methyltransferase (220 aa).

4 residues coordinate S-adenosyl-L-methionine: tryptophan 10, leucine 45, glutamate 66, and arginine 123.

This sequence belongs to the class I-like SAM-binding methyltransferase superfamily. TPMT family.

The protein localises to the cytoplasm. The enzyme catalyses S-adenosyl-L-methionine + a thiopurine = S-adenosyl-L-homocysteine + a thiopurine S-methylether.. The polypeptide is Thiopurine S-methyltransferase (Pseudomonas syringae pv. tomato (strain ATCC BAA-871 / DC3000)).